The following is a 160-amino-acid chain: Eukaryotic translation initiation factor 5A-3 (160 aa).

Basic and acidic residues predominate over residues 1 to 12; it reads MSDEEHHFESKA. The disordered stretch occupies residues 1–21; the sequence is MSDEEHHFESKADAGASKTYP. Residue Lys52 is modified to Hypusine.

It belongs to the eIF-5A family. Post-translationally, lys-52 undergoes hypusination, a unique post-translational modification that consists in the addition of a butylamino group from spermidine to lysine side chain, leading to the formation of the unusual amino acid hypusine. eIF-5As are the only known proteins to undergo this modification, which is essential for their function.

Translation factor that promotes translation elongation and termination, particularly upon ribosome stalling at specific amino acid sequence contexts. Binds between the exit (E) and peptidyl (P) site of the ribosome and promotes rescue of stalled ribosome: specifically required for efficient translation of polyproline-containing peptides as well as other motifs that stall the ribosome. Acts as a ribosome quality control (RQC) cofactor by joining the RQC complex to facilitate peptidyl transfer during CAT tailing step. The protein is Eukaryotic translation initiation factor 5A-3 (EIF5A3) of Solanum tuberosum (Potato).